A 92-amino-acid chain; its full sequence is Small ribosomal subunit protein uS19 (92 aa).

This sequence belongs to the universal ribosomal protein uS19 family.

Protein S19 forms a complex with S13 that binds strongly to the 16S ribosomal RNA. This Caulobacter sp. (strain K31) protein is Small ribosomal subunit protein uS19.